The primary structure comprises 508 residues: MLWFQGAIPAAIATAKRSGAVFVVFVAGDDEQSTQMAASWEDDKVTEASSNSFVAIKIDTKSEACLQFSQIYPVVCVPSSFFIGDSGIPLEVIAGSVSADELVTRIHKVRQMHLLKSETSVANGSQSESSVSTPSASFEPNNTCENSQSRNAELCEIPPTSDTKSDTATGGESAGHATSSQEPSGCSDQRPAEDLNIRVERLTKKLEERREEKRKEEEQREIKKEIERRKTGKEMLDYKRKQEEELTKRMLEERNREKAEDRAARERIKQQIALDRAERAARFAKTKEEVEAAKAAALLAKQAEMEVKRESYARERSTVARIQFRLPDGSSFTNQFPSDAPLEEARQFAAQTVGNTYGNFSLATMFPRREFTKEDYKKKLLDLELAPSASVVVLPAGRPTASIVHSSSGDIWTLLGTVLYPFLAIWRLISNFLFSNPPPTQTSVRVTSSEPPNPASSSKSEKREPVRKRVLEKRGDDFKKEGKIYRLRTQDDGEDENNTWNGNSTQQM.

The interaction with UBQLN1 stretch occupies residues 1–200 (MLWFQGAIPA…PAEDLNIRVE (200 aa)). The Cytoplasmic segment spans residues 1–413 (MLWFQGAIPA…VHSSSGDIWT (413 aa)). 2 stretches are compositionally biased toward polar residues: residues 117 to 151 (SETSVANGSQSESSVSTPSASFEPNNTCENSQSRN) and 160 to 187 (TSDTKSDTATGGESAGHATSSQEPSGCS). The interval 117 to 196 (SETSVANGSQ…SDQRPAEDLN (80 aa)) is disordered. A UBX domain is found at 315–393 (ERSTVARIQF…ELAPSASVVV (79 aa)). The stretch at 414–434 (LLGTVLYPFLAIWRLISNFLF) is an intramembrane region. The Cytoplasmic portion of the chain corresponds to 435 to 508 (SNPPPTQTSV…TWNGNSTQQM (74 aa)). A disordered region spans residues 440–508 (TQTSVRVTSS…TWNGNSTQQM (69 aa)). The span at 441-458 (QTSVRVTSSEPPNPASSS) shows a compositional bias: polar residues. The segment covering 459 to 491 (KSEKREPVRKRVLEKRGDDFKKEGKIYRLRTQD) has biased composition (basic and acidic residues). Position 489 is a phosphothreonine (Thr-489). Over residues 498–508 (NTWNGNSTQQM) the composition is skewed to polar residues.

Directly interacts with VCP. Interacts with UBQLN1. Forms a complex with VCP and UBQLN1.

Its subcellular location is the endoplasmic reticulum membrane. The protein resides in the nucleus envelope. In terms of biological role, involved in endoplasmic reticulum-associated protein degradation (ERAD). Acts as a platform to recruit both UBQLN1 and VCP to the ER during ERAD. This chain is UBX domain-containing protein 4 (UBXN4), found in Pongo abelii (Sumatran orangutan).